We begin with the raw amino-acid sequence, 360 residues long: MTQTPIRLLIAASGTGGHLFPALAVAEQLLDYKIEWLGVPNRLEQTLVPQDYPLHTIAVEGFQTGFSLKSVKILLGLFSSVFQVRKLLRERKIDIVFTTGGYIASPAILAARLEGIPVILHESNYLPGKVTRFFSRWCQTVALGFEGSSQYFPNVETVWVSTPVRAQFLTPQPLDLPLEEDAFLIVVVGGSQGAVAVNQLVRQCALKWLEKGAYIVHLTGDRDPEADSFKHPHYFSLPFYENMAGLLQRANLAISRAGAGTLTELAITQTPAILIPYPYAAEDHQTYNGKVFADAGAAYLYSQKDLTPQLLEKVVLDLLNSPAKLQEMAEKTGKLAVADSAKRLADLVRNHTLLAEVSQK.

Residues 15 to 17, Asn124, Arg165, Ser191, and Gln285 each bind UDP-N-acetyl-alpha-D-glucosamine; that span reads TGG.

It belongs to the glycosyltransferase 28 family. MurG subfamily.

Its subcellular location is the cell inner membrane. It carries out the reaction di-trans,octa-cis-undecaprenyl diphospho-N-acetyl-alpha-D-muramoyl-L-alanyl-D-glutamyl-meso-2,6-diaminopimeloyl-D-alanyl-D-alanine + UDP-N-acetyl-alpha-D-glucosamine = di-trans,octa-cis-undecaprenyl diphospho-[N-acetyl-alpha-D-glucosaminyl-(1-&gt;4)]-N-acetyl-alpha-D-muramoyl-L-alanyl-D-glutamyl-meso-2,6-diaminopimeloyl-D-alanyl-D-alanine + UDP + H(+). The protein operates within cell wall biogenesis; peptidoglycan biosynthesis. Cell wall formation. Catalyzes the transfer of a GlcNAc subunit on undecaprenyl-pyrophosphoryl-MurNAc-pentapeptide (lipid intermediate I) to form undecaprenyl-pyrophosphoryl-MurNAc-(pentapeptide)GlcNAc (lipid intermediate II). The sequence is that of UDP-N-acetylglucosamine--N-acetylmuramyl-(pentapeptide) pyrophosphoryl-undecaprenol N-acetylglucosamine transferase from Gloeothece citriformis (strain PCC 7424) (Cyanothece sp. (strain PCC 7424)).